A 127-amino-acid chain; its full sequence is MADLAKIVEDLSSLTVLEAAELSKLLEEKWGVSAAAPVAVAAVGGAAGGAAAPAEEEKTEFDVILTDAGANKINVIKEVRAITGLGLKEAKDLVEGAPKAVKEGVSKAEAADIKKKLEDAGAKADVK.

The protein belongs to the bacterial ribosomal protein bL12 family. Homodimer. Part of the ribosomal stalk of the 50S ribosomal subunit. Forms a multimeric L10(L12)X complex, where L10 forms an elongated spine to which 2 to 4 L12 dimers bind in a sequential fashion. Binds GTP-bound translation factors.

In terms of biological role, forms part of the ribosomal stalk which helps the ribosome interact with GTP-bound translation factors. Is thus essential for accurate translation. The sequence is that of Large ribosomal subunit protein bL12 from Rhizobium etli (strain ATCC 51251 / DSM 11541 / JCM 21823 / NBRC 15573 / CFN 42).